A 384-amino-acid chain; its full sequence is Spermidine/putrescine import ATP-binding protein PotA (384 aa).

Residues 6–238 (IAFQNVSKVF…PINHFVATFI (233 aa)) enclose the ABC transporter domain. Residue 40–47 (GASGSGKS) coordinates ATP.

This sequence belongs to the ABC transporter superfamily. Spermidine/putrescine importer (TC 3.A.1.11.1) family. In terms of assembly, the complex is composed of two ATP-binding proteins (PotA), two transmembrane proteins (PotB and PotC) and a solute-binding protein (PotD).

It localises to the cell membrane. It catalyses the reaction ATP + H2O + polyamine-[polyamine-binding protein]Side 1 = ADP + phosphate + polyamineSide 2 + [polyamine-binding protein]Side 1.. Its function is as follows. Part of the ABC transporter complex PotABCD involved in spermidine/putrescine import. Responsible for energy coupling to the transport system. This chain is Spermidine/putrescine import ATP-binding protein PotA, found in Streptococcus thermophilus (strain ATCC BAA-250 / LMG 18311).